Here is a 419-residue protein sequence, read N- to C-terminus: GTPase Obg (419 aa).

The 158-residue stretch at 1–158 (MHFVDEAFNE…FKIKTELKVL (158 aa)) folds into the Obg domain. Residues 159 to 324 (ADIGLLGFPS…LKYKMSSFLQ (166 aa)) form the OBG-type G domain. GTP-binding positions include 165–172 (GFPSVGKS), 190–194 (FTTIK), 211–214 (DLPG), 278–281 (NKMD), and 305–307 (SLV). Residues Ser172 and Thr192 each contribute to the Mg(2+) site. Positions 342–419 (TLTDNLKTIS…KICDRLFDFL (78 aa)) constitute an OCT domain.

This sequence belongs to the TRAFAC class OBG-HflX-like GTPase superfamily. OBG GTPase family. As to quaternary structure, monomer. Requires Mg(2+) as cofactor.

The protein resides in the cytoplasm. Its function is as follows. An essential GTPase which binds GTP, GDP and possibly (p)ppGpp with moderate affinity, with high nucleotide exchange rates and a fairly low GTP hydrolysis rate. Plays a role in control of the cell cycle, stress response, ribosome biogenesis and in those bacteria that undergo differentiation, in morphogenesis control. The sequence is that of GTPase Obg from Aster yellows witches'-broom phytoplasma (strain AYWB).